Consider the following 507-residue polypeptide: MLSSLKDFFVLLLPFFIGIAFIYKLWNFTSKKNLPPSPRRLPIIGNLHQLSKFPQRSLRTLSEKYGPVMLLHFGSKPVLVISSAEAAKEVMKINDVSFADRPKWYAAGRVLYEFKDMTFSPYGEYWRQARSICVLQLLSNKRVQSFKGIREEEIRAMLEKINQASNNSSIINGDEIFSTLTNDIIGRSAFGRKFSEEESGSKLRKVLQDLPPLLGSFNVGDFIPWLSWVNYLNGFEKKLNQVSKDCDQYLEQVIDDTRKRDEENGANNNGGNHGNFVSVLLHLQKEDVKGFPSEKGFLKAIILDMIVGGTDTTHLLLHWVITELLKNKHVMTKLQKEVREIVGRKWEITDEDKEKMKYLHAVIKEALRLHPSLPLLVPRVAREDINLMGYRVAKGTEVIINAWAIARDPSYWDEAEEFKPERFLSNNFDFKGLNFEYIPFGSGRRSCPGSSFAIPIVEHTVAHLMHKFNIELPNGVSAEDFDPTDAVGLVSHDQNPLSFVATPVTIF.

A helical membrane pass occupies residues 8–28; the sequence is FFVLLLPFFIGIAFIYKLWNF. N-linked (GlcNAc...) asparagine glycosylation occurs at N167. C447 contacts heme.

The protein belongs to the cytochrome P450 family. The cofactor is heme. In terms of tissue distribution, confined to roots.

The protein localises to the endoplasmic reticulum membrane. It catalyses the reaction (-)-tabersonine + reduced [NADPH--hemoprotein reductase] + O2 = (-)-(R)-19-hydroxytabersonine + oxidized [NADPH--hemoprotein reductase] + H2O + H(+). The enzyme catalyses lochnericine + reduced [NADPH--hemoprotein reductase] + O2 = horhammericine + oxidized [NADPH--hemoprotein reductase] + H2O + H(+). It carries out the reaction (-)-vincadifformine + reduced [NADPH--hemoprotein reductase] + O2 = (-)-minovincinine + oxidized [NADPH--hemoprotein reductase] + H2O + H(+). The protein operates within alkaloid biosynthesis. In terms of biological role, component of the monoterpenoid indole alkaloids (MIAs, e.g. echitovenine, tabersonine, lochnericine, 19-hydroxytabersonine and horhammericine) biosynthetic pathway; MIAs are used in cancer treatment and other medical applications. Cytochrome P450 catalyzing the conversion of (-)-tabersonine to 19-hydroxytabersonine, of lochnericine to horhammericine and of (-)-vincadifformine to (-)-minovincinine. The chain is Tabersonine/lochnericine 19-hydroxylase from Catharanthus roseus (Madagascar periwinkle).